A 95-amino-acid polypeptide reads, in one-letter code: Ubiquinol-cytochrome-c reductase complex assembly factor 3 (95 aa).

Over 1–7 the chain is Mitochondrial matrix; it reads MTTLRKL. Residues 8 to 28 form a helical membrane-spanning segment; that stretch reads LLVGALLGAGAGVGTALFALV. Residues 23 to 80 form a mediates lipid-binding region; it reads ALFALVTPGEERKQAMLKEMPEQYPQRRDEAARTKELLLATLQEAAATQENVAWRKNW. The Mitochondrial intermembrane segment spans residues 29 to 95; the sequence is TPGEERKQAM…GGGGGGGRSA (67 aa).

This sequence belongs to the UQCC3 family. As to quaternary structure, associates with the ubiquinol-cytochrome c reductase complex (mitochondrial respiratory chain complex III(CIII) or cytochrome b-c1 complex). Interacts with UQCC1. Forms a complex, named COMC, composed of UQCC1, UQCC2; UQCC3 and UQCC4; mediates MT-CYB hemylation and association with the first nuclear-encoded complex III subunit UQCRQ. Probably cleaved by OMA1 under mitochondrial stress conditions.

Its subcellular location is the mitochondrion inner membrane. In terms of biological role, required for the assembly of the ubiquinol-cytochrome c reductase complex (mitochondrial respiratory chain complex III or cytochrome b-c1 complex), mediating cytochrome b recruitment and probably stabilization within the complex. Thereby, plays an important role in ATP production by mitochondria. Cardiolipin-binding protein, it may also control the cardiolipin composition of mitochondria membranes and their morphology. This is Ubiquinol-cytochrome-c reductase complex assembly factor 3 from Bos taurus (Bovine).